The sequence spans 132 residues: D-ribose pyranase (132 aa).

Residue histidine 20 is the Proton donor of the active site. Residues aspartate 28, histidine 99, and 121–123 (YSN) each bind substrate.

The protein belongs to the RbsD / FucU family. RbsD subfamily. Homodecamer.

The protein localises to the cytoplasm. It catalyses the reaction beta-D-ribopyranose = beta-D-ribofuranose. The protein operates within carbohydrate metabolism; D-ribose degradation; D-ribose 5-phosphate from beta-D-ribopyranose: step 1/2. Its function is as follows. Catalyzes the interconversion of beta-pyran and beta-furan forms of D-ribose. The protein is D-ribose pyranase of Streptococcus uberis (strain ATCC BAA-854 / 0140J).